The chain runs to 245 residues: tRNA (guanine-N(7)-)-methyltransferase (245 aa).

Residues Glu-71, Glu-96, Asp-123, and Asp-146 each contribute to the S-adenosyl-L-methionine site. Asp-146 is an active-site residue. Position 150 (Lys-150) interacts with substrate. The interaction with RNA stretch occupies residues 152–157 (KHNKRR). Residues Asp-182 and 224–227 (TKFE) each bind substrate.

The protein belongs to the class I-like SAM-binding methyltransferase superfamily. TrmB family.

It catalyses the reaction guanosine(46) in tRNA + S-adenosyl-L-methionine = N(7)-methylguanosine(46) in tRNA + S-adenosyl-L-homocysteine. The protein operates within tRNA modification; N(7)-methylguanine-tRNA biosynthesis. Functionally, catalyzes the formation of N(7)-methylguanine at position 46 (m7G46) in tRNA. In Albidiferax ferrireducens (strain ATCC BAA-621 / DSM 15236 / T118) (Rhodoferax ferrireducens), this protein is tRNA (guanine-N(7)-)-methyltransferase.